We begin with the raw amino-acid sequence, 141 residues long: Large ribosomal subunit protein uL16 (141 aa).

The segment covering 1–19 has biased composition (basic residues); sequence MLMPKKTKYRKQQKGRNRG. The segment at 1 to 22 is disordered; that stretch reads MLMPKKTKYRKQQKGRNRGKAY.

Belongs to the universal ribosomal protein uL16 family. As to quaternary structure, part of the 50S ribosomal subunit.

In terms of biological role, binds 23S rRNA and is also seen to make contacts with the A and possibly P site tRNAs. The protein is Large ribosomal subunit protein uL16 of Nitratiruptor sp. (strain SB155-2).